The primary structure comprises 264 residues: MKQYLDFMRHVYEHGTEKSDRTGTGTRSVFGYQMRFDLNEGFPVVTTKKLHLKSIIHELLWFLQGSTNIKYLKDNGVTIWDEWADANGELGPIYGYQWRAWPTPDGRHIDQITEVVQQIRDNPDSRRLIVSAWNVGEIPQMKLPPCHAFFQFYVADGKLSCQLYQRSADIFLGVPFNIASYALLTHMIAQQCDLGVGDFVWTGGDCHIYSNHFEQVETQLSREPMKLPTLRIKHRPDSIFDYKYDDFELVGYESHPAIKAPVAV.

Arginine 21 contributes to the dUMP binding site. A (6R)-5,10-methylene-5,6,7,8-tetrahydrofolate-binding site is contributed by histidine 51. Position 126-127 (arginine 126–arginine 127) interacts with dUMP. Cysteine 146 serves as the catalytic Nucleophile. Residues arginine 166–aspartate 169, asparagine 177, and histidine 207–tyrosine 209 each bind dUMP. Aspartate 169 is a (6R)-5,10-methylene-5,6,7,8-tetrahydrofolate binding site. Position 263 (alanine 263) interacts with (6R)-5,10-methylene-5,6,7,8-tetrahydrofolate.

This sequence belongs to the thymidylate synthase family. Bacterial-type ThyA subfamily. As to quaternary structure, homodimer.

The protein resides in the cytoplasm. The catalysed reaction is dUMP + (6R)-5,10-methylene-5,6,7,8-tetrahydrofolate = 7,8-dihydrofolate + dTMP. Its pathway is pyrimidine metabolism; dTTP biosynthesis. Functionally, catalyzes the reductive methylation of 2'-deoxyuridine-5'-monophosphate (dUMP) to 2'-deoxythymidine-5'-monophosphate (dTMP) while utilizing 5,10-methylenetetrahydrofolate (mTHF) as the methyl donor and reductant in the reaction, yielding dihydrofolate (DHF) as a by-product. This enzymatic reaction provides an intracellular de novo source of dTMP, an essential precursor for DNA biosynthesis. In Cupriavidus metallidurans (strain ATCC 43123 / DSM 2839 / NBRC 102507 / CH34) (Ralstonia metallidurans), this protein is Thymidylate synthase.